Consider the following 98-residue polypeptide: Large ribosomal subunit protein uL23 (98 aa).

It belongs to the universal ribosomal protein uL23 family. Part of the 50S ribosomal subunit. Contacts protein L29, and trigger factor when it is bound to the ribosome.

One of the early assembly proteins it binds 23S rRNA. One of the proteins that surrounds the polypeptide exit tunnel on the outside of the ribosome. Forms the main docking site for trigger factor binding to the ribosome. The sequence is that of Large ribosomal subunit protein uL23 from Clostridium botulinum (strain Eklund 17B / Type B).